The primary structure comprises 322 residues: Probable heme-iron transport system permease protein IsdF (322 aa).

A run of 9 helical transmembrane segments spans residues 9–29 (LLFL…FVTG), 61–81 (ILIA…LQAA), 89–109 (ANII…MLFI), 114–134 (FYLP…IILL), 143–163 (VSMI…LEIL), 179–199 (IWSD…LTLL), 233–253 (VFLA…GIIV), 267–287 (VLIP…DLLG), and 294–314 (LEIP…IYLI).

This sequence belongs to the binding-protein-dependent transport system permease family. FecCD subfamily.

The protein localises to the cell membrane. Functionally, part of the binding-protein-dependent transport system for heme-iron. Responsible for the translocation of the substrate across the membrane. This chain is Probable heme-iron transport system permease protein IsdF (isdF), found in Staphylococcus aureus (strain MSSA476).